The following is a 200-amino-acid chain: ADP-ribosylation factor-like protein 4D (200 aa).

The N-myristoyl glycine moiety is linked to residue glycine 2. GTP is bound by residues 27–34 (GLDSAGKT), 75–79 (DVGGQ), and 134–137 (NKQD).

Belongs to the small GTPase superfamily. Arf family. In terms of assembly, interacts with CYTH2; the interaction is direct and ARL4D GTP-dependent. Does not interact with ARL4D.

The protein resides in the nucleus. Its subcellular location is the nucleolus. It is found in the cell membrane. The protein localises to the cytoplasm. In terms of biological role, small GTP-binding protein which cycles between an inactive GDP-bound and an active GTP-bound form, and the rate of cycling is regulated by guanine nucleotide exchange factors (GEF) and GTPase-activating proteins (GAP). GTP-binding protein that does not act as an allosteric activator of the cholera toxin catalytic subunit. Recruits CYTH1, CYTH2, CYTH3 and CYTH4 to the plasma membrane in GDP-bound form. In Bos taurus (Bovine), this protein is ADP-ribosylation factor-like protein 4D (ARL4D).